The primary structure comprises 161 residues: Endoribonuclease YbeY (161 aa).

His120, His124, and Asp130 together coordinate Zn(2+).

The protein belongs to the endoribonuclease YbeY family. The cofactor is Zn(2+).

It localises to the cytoplasm. Functionally, single strand-specific metallo-endoribonuclease involved in late-stage 70S ribosome quality control and in maturation of the 3' terminus of the 16S rRNA. This chain is Endoribonuclease YbeY, found in Chlamydia trachomatis serovar A (strain ATCC VR-571B / DSM 19440 / HAR-13).